A 512-amino-acid polypeptide reads, in one-letter code: Cytochrome P450 monooxygenase 208 (512 aa).

Residues 4-24 (LFLVLDTGAAVLLVALLFVVY) form a helical membrane-spanning segment. C438 provides a ligand contact to heme.

It belongs to the cytochrome P450 family. The cofactor is heme.

The protein localises to the membrane. The protein operates within secondary metabolite biosynthesis. Its function is as follows. Cytochrome P450 monooxygenase that is able to use 7-ethoxycoumarin as a substrate for oxidation. The polypeptide is Cytochrome P450 monooxygenase 208 (Postia placenta (strain ATCC 44394 / Madison 698-R) (Brown rot fungus)).